Here is a 1093-residue protein sequence, read N- to C-terminus: Error-prone DNA polymerase (1093 aa).

Residues 1 to 55 (MGWFNGPPSWAEMERVLDSKPRRAGESAAPEPDGPLSRGRATYRPPDEGRAARSS) form a disordered region. Positions 12 to 25 (EMERVLDSKPRRAG) are enriched in basic and acidic residues.

It belongs to the DNA polymerase type-C family. DnaE2 subfamily.

The protein resides in the cytoplasm. It carries out the reaction DNA(n) + a 2'-deoxyribonucleoside 5'-triphosphate = DNA(n+1) + diphosphate. DNA polymerase involved in damage-induced mutagenesis and translesion synthesis (TLS). It is not the major replicative DNA polymerase. The chain is Error-prone DNA polymerase from Mycolicibacterium paratuberculosis (strain ATCC BAA-968 / K-10) (Mycobacterium paratuberculosis).